Reading from the N-terminus, the 59-residue chain is uncharacterized protein (59 aa).

This is an uncharacterized protein from Rickettsia conorii (strain ATCC VR-613 / Malish 7).